The following is a 397-amino-acid chain: Putative F-box protein At1g26510 (397 aa).

The disordered stretch occupies residues 1–23 (MRTRSKKTKTVNNNNDLQKSEEK). One can recognise an F-box domain in the interval 24-71 (QKFDQLPLDLEIEMFRRLPLKSVARFLTLSKSCATTIRSPSFITSFPS).

This is Putative F-box protein At1g26510 from Arabidopsis thaliana (Mouse-ear cress).